The chain runs to 442 residues: Protein PRRC1-B (442 aa).

The interval 1-24 (MMEESGIETTPPSTPPPSTIGTSV) is disordered.

This sequence belongs to the PRRC1 family.

Its subcellular location is the golgi apparatus. The chain is Protein PRRC1-B (prrc1-b) from Xenopus laevis (African clawed frog).